The following is a 167-amino-acid chain: uncharacterized protein (167 aa).

The signal sequence occupies residues 1-23; the sequence is MKRLHKRFLLATFCALFTATLQA. A disulfide bridge connects residues Cys39 and Cys77.

The protein belongs to the fimbrial protein family.

Its subcellular location is the fimbrium. This is an uncharacterized protein from Escherichia coli (strain K12).